The following is a 248-amino-acid chain: MAARKNAGVLALFDVDGTLTAPRKVVTPEMLQFMKQLREHVTVGVVGGSDLVKISEQLGKSVTTDYDYCFSENGLVAHKNGELIGTQSLKSFLGDDQLKEFINFTLHYIADLDIPIKRGTFIEFRSGMLNVSPIGRNCSQEERDEFEKYDKVHNIRPKMVSVLREKFAHLNLTFSIGGQISFDVFPQGWDKTYCLRYLEEFQEIHFFGDKTYKGGNDYEIFESDRTIGHTVTSPDDTAEQCRSLFMSK.

Residue Asp14 is the Nucleophile of the active site. The Mg(2+) site is built by Asp14 and Asp16. Asp16 serves as the catalytic Proton donor/acceptor. The alpha-D-mannose 1-phosphate site is built by Arg23, Arg125, Arg136, Arg143, Ser181, and Asp183. Residues Asp209, Phe221, and Thr226 each contribute to the Mg(2+) site.

Belongs to the eukaryotic PMM family. Homodimer. Mg(2+) is required as a cofactor.

Its subcellular location is the cytoplasm. It carries out the reaction alpha-D-mannose 1-phosphate = D-mannose 6-phosphate. It participates in nucleotide-sugar biosynthesis; GDP-alpha-D-mannose biosynthesis; alpha-D-mannose 1-phosphate from D-fructose 6-phosphate: step 2/2. Catalyzes the interconversion of mannose-6-phosphate to mannose-1-phosphate, the precursor for the synthesis of GDP-mannose. GDP-mannose is an essential sugar nucleotide for the synthesis of D-mannose-containing cell wall polysaccharides (galactomannans and glucomannans), glycolipids, glycoproteins and the antioxidant L-ascorbate. This is Phosphomannomutase from Oryza sativa subsp. indica (Rice).